The chain runs to 240 residues: tRNA pseudouridine synthase A (240 aa).

The active-site Nucleophile is the aspartate 50. Residue tyrosine 109 coordinates substrate.

It belongs to the tRNA pseudouridine synthase TruA family. In terms of assembly, homodimer.

The catalysed reaction is uridine(38/39/40) in tRNA = pseudouridine(38/39/40) in tRNA. Formation of pseudouridine at positions 38, 39 and 40 in the anticodon stem and loop of transfer RNAs. The chain is tRNA pseudouridine synthase A from Campylobacter jejuni (strain RM1221).